A 452-amino-acid polypeptide reads, in one-letter code: MYQRQVSFDKPTRVEDSAYIVEGVDIKEARNTCLLFSPKDSSLSSGALANILAIFKKHDINLVHIESRSSLRVPGYEFFVEADGKSGALGKAIEDVKEQCSYFNIISRDYKDNATAVPWFPRRIRDLDRFANQILSYGSELDADHPGFTDPEYRKRRKYFADIAYNYKHGEPLPHVDYTKEEIETWGIIFRNLTKLYKTHACREYNHVFPLLVDNCGFREDNIPQLEDVSNFLRDCTGFTLRPVAGLLSSRDFLAGLAFRVFHSTQYIRHPSKPMYTPEPDVCHELMGHVPLFADPAFAQFSQEIGLASLGAPDDYIEKLSTIFWFTVEYGVCRQEGELKAYGAGLLSSYGELEYCLTDKPQLKDFEPEVTGVTKYPITQFQPLYYVADSFETAKEKTIKFANSIPRPFGVRYNAYTQSVEVLDSKPQISNLMDNINSEFQILQNAVAKLRV.

In terms of domain architecture, ACT spans phenylalanine 36–serine 107. At serine 272 the chain carries Phosphoserine; by CaMK2. Positions 284, 289, and 329 each coordinate Fe cation.

The protein belongs to the biopterin-dependent aromatic amino acid hydroxylase family. It depends on Fe(2+) as a cofactor. As to expression, phenylalanine hydrolase activity is found in yolk granules of embryos, and female abdomen and fat body tissues. Tryptophan hydroxylase is expressed in serotonergic neurons. Both enzymes are present in cuticular tissues.

The catalysed reaction is (6R)-L-erythro-5,6,7,8-tetrahydrobiopterin + L-phenylalanine + O2 = (4aS,6R)-4a-hydroxy-L-erythro-5,6,7,8-tetrahydrobiopterin + L-tyrosine. The enzyme catalyses (6R)-L-erythro-5,6,7,8-tetrahydrobiopterin + L-tryptophan + O2 = 5-hydroxy-L-tryptophan + (4aS,6R)-4a-hydroxy-L-erythro-5,6,7,8-tetrahydrobiopterin. The protein operates within amino-acid degradation; L-phenylalanine degradation; acetoacetate and fumarate from L-phenylalanine: step 1/6. With respect to regulation, N-terminal region of PAH is thought to contain allosteric binding sites for phenylalanine and to constitute an 'inhibitory' domain that regulates the activity of a catalytic domain in the C-terminal portion of the molecule. The sequence is that of Protein henna (Hn) from Drosophila melanogaster (Fruit fly).